Reading from the N-terminus, the 103-residue chain is Small ribosomal subunit protein uS10 (103 aa).

It belongs to the universal ribosomal protein uS10 family. In terms of assembly, part of the 30S ribosomal subunit.

Its function is as follows. Involved in the binding of tRNA to the ribosomes. This Pectobacterium atrosepticum (strain SCRI 1043 / ATCC BAA-672) (Erwinia carotovora subsp. atroseptica) protein is Small ribosomal subunit protein uS10.